A 957-amino-acid polypeptide reads, in one-letter code: Vacuolar membrane protease (957 aa).

Residues 1 to 10 are Cytoplasmic-facing; that stretch reads MARYNPFSFT. A helical membrane pass occupies residues 11 to 31; that stretch reads PGPVVFFTTVIYVGLFAALLV. Residues 32 to 369 lie on the Vacuolar side of the membrane; it reads THLTVPDYPS…RVFVVFQLHT (338 aa). N-linked (GlcNAc...) asparagine glycans are attached at residues Asn-48, Asn-105, and Asn-136. Positions 152 and 164 each coordinate Zn(2+). Catalysis depends on Glu-198, which acts as the Proton acceptor. Zn(2+) contacts are provided by Glu-199, Glu-224, and His-297. Residues 370-390 traverse the membrane as a helical segment; sequence LFALCVTLLVVAPITLIGLTF. The Cytoplasmic segment spans residues 391–423; the sequence is GLSKADKNYLLARKAFVYSSDDDNPVQLYGWRG. Residues 424-444 form a helical membrane-spanning segment; it reads FFRFPIIFISATAVVVALAYL. The Vacuolar portion of the chain corresponds to 445 to 450; the sequence is LVRFNA. The chain crosses the membrane as a helical span at residues 451–471; that stretch reads FIIYSSPFAVWSMMLSAWFFV. Residues 472–490 lie on the Cytoplasmic side of the membrane; the sequence is AWFFSRGADAMRPSALQRM. Residues 491–511 form a helical membrane-spanning segment; it reads YALIWLFIGSFVLLTIVTVFV. The Vacuolar segment spans residues 512–521; that stretch reads NNYQVVAGYP. A helical membrane pass occupies residues 522–542; that stretch reads ALFYFAVVFVAIMLSYLELFF. Residues 543 to 642 lie on the Cytoplasmic side of the membrane; that stretch reads APTKSAYARH…YPGEQEWSGK (100 aa). 2 disordered regions span residues 559-586 and 603-627; these read SRRN…PVAD and FTRY…SQRL. A compositionally biased stretch (basic and acidic residues) spans 603–613; the sequence is FTRYGSRRDSA. A helical membrane pass occupies residues 643 to 663; that stretch reads LPSWIWIIQLLLLAPLVIVLV. Topologically, residues 664–685 are vacuolar; sequence GQVALLLTSALYQTPSDGNSPL. A helical transmembrane segment spans residues 686 to 706; sequence FIYLAIAALSVLLLAPTGPFI. Over 707 to 713 the chain is Cytoplasmic; that stretch reads HRFTYHV. Residues 714 to 734 traverse the membrane as a helical segment; the sequence is PTFLFLVCLGTVIYNLVAFPF. Residues 735–957 are Vacuolar-facing; the sequence is SRDHRLKVYF…LVEGFKRFEI (223 aa). N-linked (GlcNAc...) asparagine glycans are attached at residues Asn-782, Asn-818, and Asn-834.

The protein belongs to the peptidase M28 family. Zn(2+) serves as cofactor.

The protein localises to the vacuole membrane. Its function is as follows. May be involved in vacuolar sorting and osmoregulation. This is Vacuolar membrane protease from Pyrenophora teres f. teres (strain 0-1) (Barley net blotch fungus).